We begin with the raw amino-acid sequence, 128 residues long: uncharacterized protein (128 aa).

This is an uncharacterized protein from Mycobacterium bovis (strain ATCC BAA-935 / AF2122/97).